Consider the following 309-residue polypeptide: Thiamine-monophosphate kinase (309 aa).

Mg(2+)-binding residues include aspartate 41 and aspartate 55. Residue histidine 62 coordinates substrate. Aspartate 83, aspartate 128, and aspartate 215 together coordinate Mg(2+). An ATP-binding site is contributed by 127–128 (GD). Serine 217 contributes to the ATP binding site. Residue aspartate 218 coordinates Mg(2+). Substrate is bound at residue glutamate 268.

The protein belongs to the thiamine-monophosphate kinase family.

It carries out the reaction thiamine phosphate + ATP = thiamine diphosphate + ADP. The protein operates within cofactor biosynthesis; thiamine diphosphate biosynthesis; thiamine diphosphate from thiamine phosphate: step 1/1. Its function is as follows. Catalyzes the ATP-dependent phosphorylation of thiamine-monophosphate (TMP) to form thiamine-pyrophosphate (TPP), the active form of vitamin B1. This is Thiamine-monophosphate kinase from Methanopyrus kandleri (strain AV19 / DSM 6324 / JCM 9639 / NBRC 100938).